The primary structure comprises 403 residues: Myeloid cell surface antigen CD33 (403 aa).

Positions 1 to 16 (MLWPLPLFLLCAGSLA) are cleaved as a signal peptide. The Ig-like V-type domain occupies 17–120 (QDLEFQLVAP…DTGMYFFRVV (104 aa)). The Extracellular portion of the chain corresponds to 18–240 (DLEFQLVAPE…VTRKSGQMRE (223 aa)). 3 disulfide bridges follow: Cys-36-Cys-169, Cys-41-Cys-100, and Cys-163-Cys-212. Asn-110 carries N-linked (GlcNAc...) asparagine glycosylation. Arg-118 contributes to the N-acetylneuraminate binding site. The Ig-like C2-type domain occupies 145–228 (PDIIIPGTLE…AGVTVERTIQ (84 aa)). N-linked (GlcNAc...) asparagine glycosylation occurs at Asn-160. The N-linked (GlcNAc...) asparagine glycan is linked to Asn-230. A helical transmembrane segment spans residues 241-267 (LVLVAVGEATVKLLILGLCLVFLIVMF). At 268–403 (CRRKTTKLSV…MLLCVSLTLS (136 aa)) the chain is on the cytoplasmic side.

Belongs to the immunoglobulin superfamily. SIGLEC (sialic acid binding Ig-like lectin) family. As to quaternary structure, homodimer; disulfide-linked. Interacts with PTPN6/SHP-1 and PTPN11/SHP-2 upon phosphorylation. Interacts with C1QA (via C-terminus); this interaction activates CD33 inhibitory motifs. Glycosylated. In terms of processing, phosphorylation is involved in binding to PTPN6 and PTPN11. As to expression, expressed on myeloid precursors in the bone marrow. In the peripheral blood, mostly expressed on granulocytes.

It localises to the cell membrane. Sialic-acid-binding immunoglobulin-like lectin (Siglec) that plays a role in mediating cell-cell interactions and in maintaining immune cells in a resting state. Preferentially binds sialic acid to the short O-linked glycans of certain mucins. This chain is Myeloid cell surface antigen CD33 (Cd33), found in Mus musculus (Mouse).